The sequence spans 333 residues: Adenosine deaminase (333 aa).

Positions 12 and 14 each coordinate Zn(2+). Positions 14, 16, and 170 each coordinate substrate. Histidine 197 contacts Zn(2+). The active-site Proton donor is the glutamate 200. Residue aspartate 278 participates in Zn(2+) binding. Aspartate 279 contacts substrate.

It belongs to the metallo-dependent hydrolases superfamily. Adenosine and AMP deaminases family. Adenosine deaminase subfamily. Requires Zn(2+) as cofactor.

The enzyme catalyses adenosine + H2O + H(+) = inosine + NH4(+). It carries out the reaction 2'-deoxyadenosine + H2O + H(+) = 2'-deoxyinosine + NH4(+). In terms of biological role, catalyzes the hydrolytic deamination of adenosine and 2-deoxyadenosine. In Escherichia coli O45:K1 (strain S88 / ExPEC), this protein is Adenosine deaminase.